Reading from the N-terminus, the 391-residue chain is MATLTETISKADKHDEKLTDFQYSKKIFNGVHEVEDDKQRTDFTTVRFGDVEKKFAVPKDYKYKNVLPTFPNAVYNLTGELAFEDKGLLADPKFSNLLKDVTKVEHLARDLGTVLYGIQLSKLNDAQKNELARYIAERGVVYFPDQEQTLEEFQELGQYYGHSHKHGSNSRPFEDKFAEFQVVYSDRFSPYDQHAKNNSLRYWHSDVSFEKQPSAQTFFKALTVPEQGGDTLFISGYAAYEALSTPLKKYLEGLTVVHSGKEQSEYHRRSGQHVRLDGDTNAHPIVRTHPVTGWKSLFISPGFTRYIPGIPRGESDAILDYLYQHIANLSQSTVRIKWTSNGVAAWDNRIVIHRATYDHLPQTRHLVRIAAQGEVPFFDANSHERSEDLRE.

Residues histidine 204 and aspartate 206 each contribute to the Fe cation site. Positions 231 and 338 each coordinate 2-oxoglutarate. Histidine 353 contributes to the Fe cation binding site. 2-oxoglutarate is bound by residues arginine 364 and arginine 368.

Belongs to the TfdA dioxygenase family. Fe(2+) is required as a cofactor.

It participates in organosulfur degradation; alkanesulfonate degradation. In terms of biological role, acts as an alpha-ketoglutarate-dependent dioxygenase active on sulfonates. This is Putative alpha-ketoglutarate-dependent sulfonate dioxygenase from Schizosaccharomyces pombe (strain 972 / ATCC 24843) (Fission yeast).